The chain runs to 212 residues: Thiamine-phosphate synthase (212 aa).

4-amino-2-methyl-5-(diphosphooxymethyl)pyrimidine contacts are provided by residues 39–41 and asparagine 71; that span reads QLR. Mg(2+) is bound by residues aspartate 72 and aspartate 91. Serine 110 serves as a coordination point for 4-amino-2-methyl-5-(diphosphooxymethyl)pyrimidine. Residue 136–138 participates in 2-[(2R,5Z)-2-carboxy-4-methylthiazol-5(2H)-ylidene]ethyl phosphate binding; it reads TGT. Lysine 139 lines the 4-amino-2-methyl-5-(diphosphooxymethyl)pyrimidine pocket. 2-[(2R,5Z)-2-carboxy-4-methylthiazol-5(2H)-ylidene]ethyl phosphate contacts are provided by residues glycine 167 and 187–188; that span reads VS.

It belongs to the thiamine-phosphate synthase family. Mg(2+) is required as a cofactor.

It carries out the reaction 2-[(2R,5Z)-2-carboxy-4-methylthiazol-5(2H)-ylidene]ethyl phosphate + 4-amino-2-methyl-5-(diphosphooxymethyl)pyrimidine + 2 H(+) = thiamine phosphate + CO2 + diphosphate. The catalysed reaction is 2-(2-carboxy-4-methylthiazol-5-yl)ethyl phosphate + 4-amino-2-methyl-5-(diphosphooxymethyl)pyrimidine + 2 H(+) = thiamine phosphate + CO2 + diphosphate. The enzyme catalyses 4-methyl-5-(2-phosphooxyethyl)-thiazole + 4-amino-2-methyl-5-(diphosphooxymethyl)pyrimidine + H(+) = thiamine phosphate + diphosphate. The protein operates within cofactor biosynthesis; thiamine diphosphate biosynthesis; thiamine phosphate from 4-amino-2-methyl-5-diphosphomethylpyrimidine and 4-methyl-5-(2-phosphoethyl)-thiazole: step 1/1. Its function is as follows. Condenses 4-methyl-5-(beta-hydroxyethyl)thiazole monophosphate (THZ-P) and 2-methyl-4-amino-5-hydroxymethyl pyrimidine pyrophosphate (HMP-PP) to form thiamine monophosphate (TMP). The sequence is that of Thiamine-phosphate synthase from Azorhizobium caulinodans (strain ATCC 43989 / DSM 5975 / JCM 20966 / LMG 6465 / NBRC 14845 / NCIMB 13405 / ORS 571).